Reading from the N-terminus, the 343-residue chain is Cytoplasmic tRNA 2-thiolation protein 1 (343 aa).

This sequence belongs to the TtcA family. CTU1/NCS6/ATPBD3 subfamily.

It is found in the cytoplasm. The protein operates within tRNA modification; 5-methoxycarbonylmethyl-2-thiouridine-tRNA biosynthesis. Its function is as follows. Plays a central role in 2-thiolation of mcm(5)S(2)U at tRNA wobble positions of tRNA(Lys), tRNA(Glu) and tRNA(Gln). Directly binds tRNAs and probably acts by catalyzing adenylation of tRNAs, an intermediate required for 2-thiolation. It is unclear whether it acts as a sulfurtransferase that transfers sulfur from thiocarboxylated URM1 onto the uridine of tRNAs at wobble position. The sequence is that of Cytoplasmic tRNA 2-thiolation protein 1 from Drosophila sechellia (Fruit fly).